Here is a 796-residue protein sequence, read N- to C-terminus: Inactive dipeptidyl peptidase 10 (796 aa).

Residues 1–34 (MNQTASVSHHIKCQPSKTIKELGSNSPPQRNWKG) are Cytoplasmic-facing. Residues 1–55 (MNQTASVSHHIKCQPSKTIKELGSNSPPQRNWKGIAIALLVILVVCSLITMSVIL) are mediates effects on KCND2. Residues 35 to 55 (IAIALLVILVVCSLITMSVIL) traverse the membrane as a helical; Signal-anchor for type II membrane protein segment. Residues 56–796 (LTPDELTNSS…VLPQEPEEDE (741 aa)) lie on the Extracellular side of the membrane. Residues asparagine 63, asparagine 90, asparagine 111, and asparagine 119 are each glycosylated (N-linked (GlcNAc...) asparagine). A phosphotyrosine mark is found at tyrosine 138 and tyrosine 143. N-linked (GlcNAc...) asparagine glycans are attached at residues asparagine 257, asparagine 342, and asparagine 748.

Belongs to the peptidase S9B family. DPPIV subfamily. As to quaternary structure, may form oligomers. Interacts with KCND1. Interacts with KCND2. Identified in a complex with KCND2 and KCNIP3. Post-translationally, N-glycosylation is important for cell surface expression, specially at Asn-257, which is crucial. As to expression, detected in brain cortex, hippocampus, thalamus and cerebellum Purkinje cells (at protein level).

It localises to the cell membrane. Promotes cell surface expression of the potassium channel KCND2. Modulates the activity and gating characteristics of the potassium channel KCND2. Has no dipeptidyl aminopeptidase activity. This is Inactive dipeptidyl peptidase 10 (Dpp10) from Rattus norvegicus (Rat).